Consider the following 37-residue polypeptide: MFDDQDLGFFANFLGIFIFVLVMAYHFVMADVKYEGN.

Topologically, residues 1 to 8 (MFDDQDLG) are lumenal. Residues 9-29 (FFANFLGIFIFVLVMAYHFVM) traverse the membrane as a helical segment. Residues 30 to 37 (ADVKYEGN) are Cytoplasmic-facing.

This sequence belongs to the OST4 family. In terms of assembly, component of the oligosaccharyltransferase (OST) complex.

The protein resides in the endoplasmic reticulum membrane. In terms of biological role, subunit of the oligosaccharyl transferase (OST) complex that catalyzes the initial transfer of a defined glycan (Glc(3)Man(9)GlcNAc(2) in eukaryotes) from the lipid carrier dolichol-pyrophosphate to an asparagine residue within an Asn-X-Ser/Thr consensus motif in nascent polypeptide chains, the first step in protein N-glycosylation. N-glycosylation occurs cotranslationally and the complex associates with the Sec61 complex at the channel-forming translocon complex that mediates protein translocation across the endoplasmic reticulum (ER). All subunits are required for a maximal enzyme activity. The sequence is that of Dolichyl-diphosphooligosaccharide--protein glycosyltransferase subunit 4B (OST4B) from Oryza sativa subsp. japonica (Rice).